The following is a 381-amino-acid chain: Homoserine O-succinyltransferase (381 aa).

Residues 45–360 (NAVLVCHALN…PHGHDAFLLD (316 aa)) enclose the AB hydrolase-1 domain. Serine 151 functions as the Nucleophile in the catalytic mechanism. Arginine 221 contributes to the substrate binding site. Catalysis depends on residues aspartate 321 and histidine 354. Aspartate 355 provides a ligand contact to substrate.

It belongs to the AB hydrolase superfamily. MetX family. Homodimer.

The protein localises to the cytoplasm. It catalyses the reaction L-homoserine + succinyl-CoA = O-succinyl-L-homoserine + CoA. Its pathway is amino-acid biosynthesis; L-methionine biosynthesis via de novo pathway; O-succinyl-L-homoserine from L-homoserine: step 1/1. Functionally, transfers a succinyl group from succinyl-CoA to L-homoserine, forming succinyl-L-homoserine. The polypeptide is Homoserine O-succinyltransferase (Paraburkholderia phytofirmans (strain DSM 17436 / LMG 22146 / PsJN) (Burkholderia phytofirmans)).